The following is a 237-amino-acid chain: Uridylate kinase (237 aa).

12–15 is an ATP binding site; the sequence is KLSG. The interval 20 to 25 is involved in allosteric activation by GTP; it reads GENGFG. Position 54 (Gly-54) interacts with UMP. ATP-binding residues include Gly-55 and Arg-59. Residues Asp-72 and 133–140 each bind UMP; that span reads TGNPYFST. ATP contacts are provided by Tyr-166 and Asp-169.

The protein belongs to the UMP kinase family. In terms of assembly, homohexamer.

The protein localises to the cytoplasm. It catalyses the reaction UMP + ATP = UDP + ADP. Its pathway is pyrimidine metabolism; CTP biosynthesis via de novo pathway; UDP from UMP (UMPK route): step 1/1. Allosterically activated by GTP. Inhibited by UTP. Catalyzes the reversible phosphorylation of UMP to UDP. This chain is Uridylate kinase, found in Clostridium perfringens (strain SM101 / Type A).